Reading from the N-terminus, the 275-residue chain is Aldo-keto reductase MSMEG_2408/MSMEI_2347 (275 aa).

Residue tyrosine 49 is the Proton donor of the active site. The NADPH site is built by leucine 189, isoleucine 227, lysine 229, serine 230, valine 231, arginine 235, serine 238, and asparagine 239. Lysine 262 participates in a covalent cross-link: Isoglutamyl lysine isopeptide (Lys-Gln) (interchain with Q-Cter in protein Pup).

Belongs to the aldo/keto reductase family.

The sequence is that of Aldo-keto reductase MSMEG_2408/MSMEI_2347 from Mycolicibacterium smegmatis (strain ATCC 700084 / mc(2)155) (Mycobacterium smegmatis).